Reading from the N-terminus, the 1034-residue chain is Beta-galactosidase (1034 aa).

Glutamate 481 functions as the Proton donor in the catalytic mechanism. The active-site Nucleophile is the glutamate 547.

It belongs to the glycosyl hydrolase 2 family.

The catalysed reaction is Hydrolysis of terminal non-reducing beta-D-galactose residues in beta-D-galactosides.. This chain is Beta-galactosidase (bgaM), found in Priestia megaterium (strain DSM 319 / IMG 1521) (Bacillus megaterium).